A 135-amino-acid chain; its full sequence is Hemoglobin subunit alpha (135 aa).

The Globin domain occupies 1-135 (AAVVALWGKI…VALALAERYK (135 aa)). Position 52 (His-52) interacts with O2. His-81 is a binding site for heme b.

Belongs to the globin family. As to quaternary structure, hb1 is a heterotetramer of two alpha chains and two beta-1 chains. Hb2 is a heterotetramer of two alpha chains and two beta-2 chains. Post-translationally, the N-terminus is blocked. In terms of tissue distribution, red blood cells.

In terms of biological role, involved in oxygen transport from gills to the various peripheral tissues. The polypeptide is Hemoglobin subunit alpha (Dissostichus eleginoides (Patagonian toothfish)).